Consider the following 309-residue polypeptide: tRNA dimethylallyltransferase (309 aa).

Position 9-16 (9-16 (GPTAIGKT)) interacts with ATP. Residue 11–16 (TAIGKT) coordinates substrate. 2 interaction with substrate tRNA regions span residues 34-37 (DSRQ) and 164-168 (QRMMR).

The protein belongs to the IPP transferase family. As to quaternary structure, monomer. It depends on Mg(2+) as a cofactor.

It catalyses the reaction adenosine(37) in tRNA + dimethylallyl diphosphate = N(6)-dimethylallyladenosine(37) in tRNA + diphosphate. Catalyzes the transfer of a dimethylallyl group onto the adenine at position 37 in tRNAs that read codons beginning with uridine, leading to the formation of N6-(dimethylallyl)adenosine (i(6)A). The polypeptide is tRNA dimethylallyltransferase (Flavobacterium johnsoniae (strain ATCC 17061 / DSM 2064 / JCM 8514 / BCRC 14874 / CCUG 350202 / NBRC 14942 / NCIMB 11054 / UW101) (Cytophaga johnsonae)).